The primary structure comprises 232 residues: Ribonuclease 3 (232 aa).

In terms of domain architecture, RNase III spans 5–134 (QTVLKNHFAI…FLGALLLDKD (130 aa)). A Mg(2+)-binding site is contributed by Glu-47. Asp-51 is a catalytic residue. Residues Asp-120 and Glu-123 each contribute to the Mg(2+) site. Glu-123 is a catalytic residue. One can recognise a DRBM domain in the interval 160-229 (DYKTHLQELL…AKNAVEKGLD (70 aa)).

It belongs to the ribonuclease III family. Homodimer. Mg(2+) is required as a cofactor.

It is found in the cytoplasm. The enzyme catalyses Endonucleolytic cleavage to 5'-phosphomonoester.. Digests double-stranded RNA. Involved in the processing of primary rRNA transcript to yield the immediate precursors to the large and small rRNAs (23S and 16S). Processes some mRNAs, and tRNAs when they are encoded in the rRNA operon. Processes pre-crRNA and tracrRNA of type II CRISPR loci if present in the organism. In Streptococcus pneumoniae (strain CGSP14), this protein is Ribonuclease 3.